We begin with the raw amino-acid sequence, 391 residues long: Inhibin beta B chain (391 aa).

The N-terminal stretch at 1-25 (MDGAARRGVLAALLACGLLLLGAAA) is a signal peptide. Residues 26 to 276 (TPTPPPAGSS…ADNKHRIRKR (251 aa)) constitute a propeptide that is removed on maturation. The segment at 27–47 (PTPPPAGSSPQDTCTSCGFRR) is disordered. A glycan (N-linked (GlcNAc...) asparagine) is linked at N77. 4 cysteine pairs are disulfide-bonded: C280/C288, C287/C356, C316/C388, and C320/C390.

Belongs to the TGF-beta family. Dimeric, linked by one or more disulfide bonds. Inhibin A is a dimer of alpha and beta-A. Inhibin B is a dimer of alpha and beta-B. Activin A is a homodimer of beta-A. Activin B is a homodimer of beta-B. Activin AB is a dimer of beta-A and beta-B.

The protein localises to the secreted. Inhibins and activins inhibit and activate, respectively, the secretion of follitropin by the pituitary gland. Inhibins/activins are involved in regulating a number of diverse functions such as hypothalamic and pituitary hormone secretion, gonadal hormone secretion, germ cell development and maturation, erythroid differentiation, insulin secretion, nerve cell survival, embryonic axial development or bone growth, depending on their subunit composition. Inhibins appear to oppose the functions of activins. The polypeptide is Inhibin beta B chain (INHBB) (Gallus gallus (Chicken)).